We begin with the raw amino-acid sequence, 279 residues long: tRNA (guanine-N(1)-)-methyltransferase (279 aa).

Residues G132 and 152–157 (IGDYVL) contribute to the S-adenosyl-L-methionine site.

Belongs to the RNA methyltransferase TrmD family. In terms of assembly, homodimer.

It is found in the cytoplasm. It carries out the reaction guanosine(37) in tRNA + S-adenosyl-L-methionine = N(1)-methylguanosine(37) in tRNA + S-adenosyl-L-homocysteine + H(+). Functionally, specifically methylates guanosine-37 in various tRNAs. The protein is tRNA (guanine-N(1)-)-methyltransferase of Saccharophagus degradans (strain 2-40 / ATCC 43961 / DSM 17024).